We begin with the raw amino-acid sequence, 378 residues long: B3 domain-containing protein Os03g0622200 (378 aa).

The TF-B3 1 DNA-binding region spans 29–124 (SKHFLKHMVG…SFDVLIFDPS (96 aa)). The disordered stretch occupies residues 140–159 (GRAENSAGAEQGGRNGRRTP). Residues 256–370 (FVQVIHSSHV…TMTVHVLRRV (115 aa)) constitute a DNA-binding region (TF-B3 2).

It localises to the nucleus. This is B3 domain-containing protein Os03g0622200 from Oryza sativa subsp. japonica (Rice).